Consider the following 208-residue polypeptide: Protein-L-isoaspartate O-methyltransferase (208 aa).

Serine 59 is a catalytic residue.

This sequence belongs to the methyltransferase superfamily. L-isoaspartyl/D-aspartyl protein methyltransferase family.

Its subcellular location is the cytoplasm. It catalyses the reaction [protein]-L-isoaspartate + S-adenosyl-L-methionine = [protein]-L-isoaspartate alpha-methyl ester + S-adenosyl-L-homocysteine. Its function is as follows. Catalyzes the methyl esterification of L-isoaspartyl residues in peptides and proteins that result from spontaneous decomposition of normal L-aspartyl and L-asparaginyl residues. It plays a role in the repair and/or degradation of damaged proteins. This is Protein-L-isoaspartate O-methyltransferase from Citrobacter koseri (strain ATCC BAA-895 / CDC 4225-83 / SGSC4696).